The following is a 190-amino-acid chain: Dual-action ribosomal maturation protein DarP (190 aa).

A disordered region spans residues 1-31 (MIHADHDDNLPDDEEGLPLPPSKSQRKRDMH).

Belongs to the DarP family.

The protein localises to the cytoplasm. Member of a network of 50S ribosomal subunit biogenesis factors which assembles along the 30S-50S interface, preventing incorrect 23S rRNA structures from forming. Promotes peptidyl transferase center (PTC) maturation. The polypeptide is Dual-action ribosomal maturation protein DarP (Aromatoleum aromaticum (strain DSM 19018 / LMG 30748 / EbN1) (Azoarcus sp. (strain EbN1))).